Reading from the N-terminus, the 369-residue chain is Coproporphyrin III ferrochelatase (369 aa).

Residues Ser-61 and Tyr-130 each coordinate Fe-coproporphyrin III. Fe(2+) is bound by residues His-197 and Glu-286.

Belongs to the ferrochelatase family.

The protein resides in the cytoplasm. It catalyses the reaction Fe-coproporphyrin III + 2 H(+) = coproporphyrin III + Fe(2+). The protein operates within porphyrin-containing compound metabolism; protoheme biosynthesis. Functionally, involved in coproporphyrin-dependent heme b biosynthesis. Catalyzes the insertion of ferrous iron into coproporphyrin III to form Fe-coproporphyrin III. The protein is Coproporphyrin III ferrochelatase of Corynebacterium diphtheriae (strain ATCC 700971 / NCTC 13129 / Biotype gravis).